A 422-amino-acid polypeptide reads, in one-letter code: MAM and fibronectin type III domain-containing protein 1 (422 aa).

Residues 1–75 (KFYYHMYGAT…VSLMEGICAG (75 aa)) form the MAM domain. 3 consecutive Fibronectin type-III domains span residues 2–74 (FYYH…GICA), 196–286 (PGWN…QART), and 291–386 (PSRA…YIVT).

Component of the acid-insoluble and acid-soluble organic matrix of the aragonitic skeleton (at protein level).

It is found in the secreted. This Acropora millepora (Staghorn coral) protein is MAM and fibronectin type III domain-containing protein 1.